A 178-amino-acid polypeptide reads, in one-letter code: Large ribosomal subunit protein uL6 (178 aa).

Belongs to the universal ribosomal protein uL6 family. In terms of assembly, part of the 50S ribosomal subunit.

This protein binds to the 23S rRNA, and is important in its secondary structure. It is located near the subunit interface in the base of the L7/L12 stalk, and near the tRNA binding site of the peptidyltransferase center. This chain is Large ribosomal subunit protein uL6, found in Staphylococcus epidermidis (strain ATCC 35984 / DSM 28319 / BCRC 17069 / CCUG 31568 / BM 3577 / RP62A).